The primary structure comprises 74 residues: U4-theraphotoxin-Cg1a (74 aa).

A signal peptide spans 1–19 (MNATIFAFLLLLNLAMHNA). A propeptide spanning residues 20–39 (TEQSSETDMDDTLLIPEINR) is cleaved from the precursor. Disulfide bonds link Cys-42-Cys-56, Cys-49-Cys-61, and Cys-55-Cys-71.

It belongs to the neurotoxin 36 family. 01 subfamily. Expressed by the venom gland.

It localises to the secreted. Probable ion channel inhibitor. The chain is U4-theraphotoxin-Cg1a from Chilobrachys guangxiensis (Chinese earth tiger tarantula).